Consider the following 457-residue polypeptide: Solute carrier family 38 member 6 (457 aa).

Met-1 carries the N-acetylmethionine modification. A phosphoserine mark is found at Ser-4 and Ser-7. 5 helical membrane-spanning segments follow: residues 48–68 (FGLS…LGLA), 70–90 (VMAN…ALLA), 112–132 (LGLF…IIIQ), 171–191 (LLII…KIGF), and 192–212 (LGYT…VVVI). An intrachain disulfide couples Cys-219 to Cys-239. A glycan (N-linked (GlcNAc...) asparagine) is linked at Asn-234. A helical transmembrane segment spans residues 251 to 271 (VYAIPTMAFSFLCHTSVLPIY). A glycan (N-linked (GlcNAc...) asparagine) is linked at Asn-284. 5 helical membrane passes run 289–309 (AIAL…LTFY), 328–348 (AAVM…VPLI), 372–392 (SLTT…VPDI), 395–415 (VFGV…PGLF), and 432–452 (ALSL…LIIL).

Belongs to the amino acid/polyamine transporter 2 family.

Its subcellular location is the cell membrane. It localises to the synapse. The catalysed reaction is L-glutamine(out) = L-glutamine(in). The enzyme catalyses L-glutamate(out) = L-glutamate(in). In terms of biological role, amino acid transporter with an apparent selectivity for L-glutamine and L-glutamate. May facilitate glutamine uptake in excitatory neurons. The transport mechanism remains to be elucidated. The sequence is that of Solute carrier family 38 member 6 from Rattus norvegicus (Rat).